The chain runs to 185 residues: Elongation factor P (185 aa).

Belongs to the elongation factor P family.

The protein localises to the cytoplasm. It functions in the pathway protein biosynthesis; polypeptide chain elongation. Functionally, involved in peptide bond synthesis. Stimulates efficient translation and peptide-bond synthesis on native or reconstituted 70S ribosomes in vitro. Probably functions indirectly by altering the affinity of the ribosome for aminoacyl-tRNA, thus increasing their reactivity as acceptors for peptidyl transferase. The chain is Elongation factor P from Tropheryma whipplei (strain TW08/27) (Whipple's bacillus).